The chain runs to 568 residues: Acetate--CoA ligase CCL3 (568 aa).

ATP-binding positions include 204–212, 340–345, Asp437, 449–452, and Lys547; these read TSGTTASPK, HTYGLS, and IKDR. The SBD1 stretch occupies residues 272 to 340; sequence TAKGVYSAIA…MSEKGFKVAH (69 aa). Residues 341-417 form an SBD2 region; that stretch reads TYGLSETYGP…MRGNAVMKGY (77 aa).

This sequence belongs to the ATP-dependent AMP-binding enzyme family. As to expression, mostly expressed in glandular trichomes (lupulin glands) after flowering and in old leaves, and, to a lower extent, in stems, young leaves, cones and flowers.

The protein localises to the cytoplasm. It localises to the cytosol. It carries out the reaction acetate + ATP + CoA = acetyl-CoA + AMP + diphosphate. It catalyses the reaction propanoate + ATP + CoA = propanoyl-CoA + AMP + diphosphate. The enzyme catalyses butanoate + ATP + CoA = butanoyl-CoA + AMP + diphosphate. The catalysed reaction is 3-methylbutanoate + ATP + CoA = 3-methylbutanoyl-CoA + AMP + diphosphate. It carries out the reaction pentanoate + ATP + CoA = pentanoyl-CoA + AMP + diphosphate. It catalyses the reaction hexanoate + ATP + CoA = hexanoyl-CoA + AMP + diphosphate. The enzyme catalyses 2-methylpropanoate + ATP + CoA = 2-methylpropanoyl-CoA + AMP + diphosphate. The catalysed reaction is 2-methylbutanoate + ATP + CoA = 2-methylbutanoyl-CoA + AMP + diphosphate. It carries out the reaction 2-methylpentanoate + ATP + CoA = 2-methylpentanoyl-CoA + AMP + diphosphate. It catalyses the reaction 3-methylpentanoate + ATP + CoA = 3-methylpentanoyl-CoA + AMP + diphosphate. The enzyme catalyses 4-methylpentanoate + ATP + CoA = 4-methylpentanoyl-CoA + AMP + diphosphate. Its pathway is secondary metabolite biosynthesis. Functionally, involved in the biosynthesis of prenylated phenolics natural products which contribute to the bitter taste of beer and display broad biological activities. Catalyzes the ligation of CoA on propanoate to produce propanoyl-CoA. Can also use 2-methylpropanoate (isobutyric acid), acetate, butanoate, isovalerate, pentanoate, hexanoate, 2-methylbutanoate, 2-methylpentanoate, 3-methylpentanoate and 4-methylpentanoate as substrates with a lower efficiency. Triggers the formation of very short chain acyl-CoAs from the corresponding fatty acids, including acetic acid, propanoic acid, butyric acid and its isomer. In Humulus lupulus (European hop), this protein is Acetate--CoA ligase CCL3.